We begin with the raw amino-acid sequence, 148 residues long: Deoxyuridine 5'-triphosphate nucleotidohydrolase (148 aa).

Substrate is bound by residues 68-70 (RSG), Asn81, 85-87 (TID), and Lys95.

The protein belongs to the dUTPase family. It depends on Mg(2+) as a cofactor.

It carries out the reaction dUTP + H2O = dUMP + diphosphate + H(+). It functions in the pathway pyrimidine metabolism; dUMP biosynthesis; dUMP from dCTP (dUTP route): step 2/2. Its function is as follows. This enzyme is involved in nucleotide metabolism: it produces dUMP, the immediate precursor of thymidine nucleotides and it decreases the intracellular concentration of dUTP so that uracil cannot be incorporated into DNA. This chain is Deoxyuridine 5'-triphosphate nucleotidohydrolase, found in Rickettsia rickettsii (strain Iowa).